Consider the following 642-residue polypeptide: Bifunctional protein glk (642 aa).

Residues 1–340 (MSTGAQSKAA…QLSNRSGGAS (340 aa)) form a glucokinase region. 23–28 (ADVGGT) serves as a coordination point for ATP. The region spanning 341–417 (SAVFERIRQM…LKLATGLTGT (77 aa)) is the HTH rpiR-type domain. The putative HTH-type transcriptional regulator stretch occupies residues 341 to 642 (SAVFERIRQM…SPAAKDVARD (302 aa)). A DNA-binding region (H-T-H motif) is located at residues 377-396 (IVDIARKADVSQPTVIRFCR). The SIS domain maps to 461–600 (AIEILNGARR…AVGVAIRRAS (140 aa)). A helical transmembrane segment spans residues 576 to 596 (SMISRILHLLMIDILAVGVAI).

This sequence in the N-terminal section; belongs to the bacterial glucokinase family.

It localises to the membrane. It carries out the reaction D-glucose + ATP = D-glucose 6-phosphate + ADP + H(+). This is Bifunctional protein glk (glk) from Burkholderia lata (strain ATCC 17760 / DSM 23089 / LMG 22485 / NCIMB 9086 / R18194 / 383).